The following is a 432-amino-acid chain: Gamma-glutamyl phosphate reductase (432 aa).

Belongs to the gamma-glutamyl phosphate reductase family.

The protein resides in the cytoplasm. It carries out the reaction L-glutamate 5-semialdehyde + phosphate + NADP(+) = L-glutamyl 5-phosphate + NADPH + H(+). It participates in amino-acid biosynthesis; L-proline biosynthesis; L-glutamate 5-semialdehyde from L-glutamate: step 2/2. Functionally, catalyzes the NADPH-dependent reduction of L-glutamate 5-phosphate into L-glutamate 5-semialdehyde and phosphate. The product spontaneously undergoes cyclization to form 1-pyrroline-5-carboxylate. The chain is Gamma-glutamyl phosphate reductase from Brachyspira hyodysenteriae (strain ATCC 49526 / WA1).